The primary structure comprises 290 residues: Glycine--tRNA ligase alpha subunit (290 aa).

It belongs to the class-II aminoacyl-tRNA synthetase family. Tetramer of two alpha and two beta subunits.

It is found in the cytoplasm. The enzyme catalyses tRNA(Gly) + glycine + ATP = glycyl-tRNA(Gly) + AMP + diphosphate. The protein is Glycine--tRNA ligase alpha subunit of Gloeobacter violaceus (strain ATCC 29082 / PCC 7421).